The sequence spans 250 residues: Ribosomal RNA small subunit methyltransferase J (250 aa).

Residues 101-102 (RD), 117-118 (ER), 153-154 (SS), and Asp-171 contribute to the S-adenosyl-L-methionine site.

This sequence belongs to the methyltransferase superfamily. RsmJ family.

It localises to the cytoplasm. The enzyme catalyses guanosine(1516) in 16S rRNA + S-adenosyl-L-methionine = N(2)-methylguanosine(1516) in 16S rRNA + S-adenosyl-L-homocysteine + H(+). In terms of biological role, specifically methylates the guanosine in position 1516 of 16S rRNA. This chain is Ribosomal RNA small subunit methyltransferase J, found in Shigella flexneri serotype 5b (strain 8401).